The sequence spans 565 residues: Oxygen-dependent choline dehydrogenase (565 aa).

7-36 provides a ligand contact to FAD; the sequence is DYIICGAGSAGNVLATRLTEDPGVTVLLLE. Catalysis depends on His-474, which acts as the Proton acceptor.

This sequence belongs to the GMC oxidoreductase family. FAD serves as cofactor.

It catalyses the reaction choline + A = betaine aldehyde + AH2. The catalysed reaction is betaine aldehyde + NAD(+) + H2O = glycine betaine + NADH + 2 H(+). It functions in the pathway amine and polyamine biosynthesis; betaine biosynthesis via choline pathway; betaine aldehyde from choline (cytochrome c reductase route): step 1/1. Its function is as follows. Involved in the biosynthesis of the osmoprotectant glycine betaine. Catalyzes the oxidation of choline to betaine aldehyde and betaine aldehyde to glycine betaine at the same rate. This chain is Oxygen-dependent choline dehydrogenase, found in Burkholderia pseudomallei (strain 1710b).